The following is a 620-amino-acid chain: Glutathione-regulated potassium-efflux system protein KefC (620 aa).

The next 12 membrane-spanning stretches (helical) occupy residues 4 to 24 (HTLIQALIYLGSAALIVPIAV), 26 to 46 (LGLGSVLGYLIAGCIIGPWGL), 54 to 74 (SILHFAEIGVVLMLFIIGLEL), 90 to 110 (GALQMVICGGLLGLFCMLLGL), 114 to 134 (VAELIGMTLALSSTAIAMQAM), 149 to 169 (FAVLLFQDIAAIPLVAMIPLL), 178 to 198 (MGAFALSALKVAGALVLVVLL), 218 to 238 (VFSAVALFLVFGFGLLLEEVG), 270 to 290 (GLLLGLFFIGVGMSIDFGTLI), 294 to 314 (LRIVILLLGFLIIKIAMLWLI), 327 to 347 (WFAVLLGQGSEFAFVVFGAAQ), and 359 to 379 (SLTLAVALSMAATPILLVILN). The RCK N-terminal domain maps to 399-518 (QPRVIIAGFG…AGVEKPERET (120 aa)). The interval 597–620 (GWQGTEEGKHTGNMADEPETKPSS) is disordered.

Belongs to the monovalent cation:proton antiporter 2 (CPA2) transporter (TC 2.A.37) family. KefC subfamily. As to quaternary structure, homodimer. Interacts with the regulatory subunit KefF.

The protein resides in the cell inner membrane. Pore-forming subunit of a potassium efflux system that confers protection against electrophiles. Catalyzes K(+)/H(+) antiport. In Escherichia coli O17:K52:H18 (strain UMN026 / ExPEC), this protein is Glutathione-regulated potassium-efflux system protein KefC.